The sequence spans 805 residues: Leucine--tRNA ligase (805 aa).

A 'HIGH' region motif is present at residues 40 to 51; it reads PYPSGQGLHVGH. The 'KMSKS' region motif lies at 577–581; it reads KMSKS. An ATP-binding site is contributed by K580.

The protein belongs to the class-I aminoacyl-tRNA synthetase family.

It localises to the cytoplasm. It carries out the reaction tRNA(Leu) + L-leucine + ATP = L-leucyl-tRNA(Leu) + AMP + diphosphate. The sequence is that of Leucine--tRNA ligase from Limosilactobacillus fermentum (strain NBRC 3956 / LMG 18251) (Lactobacillus fermentum).